A 368-amino-acid polypeptide reads, in one-letter code: Biglycan (368 aa).

The signal sequence occupies residues 1 to 16 (MWPLWRLVSLLALSQA). A propeptide spanning residues 17 to 37 (LPFEQRGFWDFTLDDGPFMMN) is cleaved from the precursor. Residues serine 42 and serine 47 are each glycosylated (O-linked (Xyl...) (glycosaminoglycan) serine). 2 disulfide bridges follow: cysteine 63-cysteine 69 and cysteine 67-cysteine 76. 12 LRR repeats span residues 82–102 (KSVP…NNDI), 103–126 (SELR…NNKI), 127–150 (SKIH…KNHL), 151–171 (VEIP…DNRI), 172–195 (RKVP…GNPL), 196–220 (ENSG…EAKL), 221–241 (TGIP…HNKI), 242–265 (QAIE…HNQI), 266–289 (RMIE…NNKL), 290–312 (ARVP…SNNI), 313–342 (TKVG…NNPV), and 343–368 (PYWE…NYKK). Serine 180 and serine 198 each carry an O-linked (Xyl...) (glycosaminoglycan) serine glycan. 2 N-linked (GlcNAc...) asparagine glycosylation sites follow: asparagine 270 and asparagine 311. Cysteine 321 and cysteine 354 are oxidised to a cystine.

This sequence belongs to the small leucine-rich proteoglycan (SLRP) family. SLRP class I subfamily. In terms of assembly, homodimer. Forms a ternary complex with MFAP2 and ELN. The two attached glycosaminoglycan chains can be either chondroitin sulfate or dermatan sulfate. Detected in placenta (at protein level). Found in several connective tissues, especially in articular cartilages.

The protein localises to the secreted. It is found in the extracellular space. Its subcellular location is the extracellular matrix. Its function is as follows. May be involved in collagen fiber assembly. The chain is Biglycan (BGN) from Homo sapiens (Human).